We begin with the raw amino-acid sequence, 125 residues long: Calcitonin receptor-stimulating peptide 1 (125 aa).

The N-terminal stretch at 1-25 (MGFWKFPPFLVLSILVLYQAGMFHA) is a signal peptide. The propeptide occupies 26 to 77 (APFRSVFDGRFDPATLDEEESRLLLAAMVNDYEQMRARESEKAQKTEGSRIQ). A disulfide bridge connects residues cysteine 81 and cysteine 86.

It belongs to the calcitonin family.

The protein localises to the secreted. Its function is as follows. Stimulates cAMP production in porcine kidney cell line LLC-PK1 via the calcitonin receptor (CT) but not via the CT-like (CL) receptor. In Capra hircus (Goat), this protein is Calcitonin receptor-stimulating peptide 1 (CRSP1).